We begin with the raw amino-acid sequence, 159 residues long: Ribosomal RNA large subunit methyltransferase H (159 aa).

S-adenosyl-L-methionine-binding positions include L76, G108, and 127–132 (FSKMTF).

Belongs to the RNA methyltransferase RlmH family. Homodimer.

It localises to the cytoplasm. The catalysed reaction is pseudouridine(1915) in 23S rRNA + S-adenosyl-L-methionine = N(3)-methylpseudouridine(1915) in 23S rRNA + S-adenosyl-L-homocysteine + H(+). Functionally, specifically methylates the pseudouridine at position 1915 (m3Psi1915) in 23S rRNA. The polypeptide is Ribosomal RNA large subunit methyltransferase H (Halalkalibacterium halodurans (strain ATCC BAA-125 / DSM 18197 / FERM 7344 / JCM 9153 / C-125) (Bacillus halodurans)).